The primary structure comprises 108 residues: Nucleoid-associated protein CHAB381_0200 (108 aa).

This sequence belongs to the YbaB/EbfC family. In terms of assembly, homodimer.

It is found in the cytoplasm. The protein localises to the nucleoid. In terms of biological role, binds to DNA and alters its conformation. May be involved in regulation of gene expression, nucleoid organization and DNA protection. This Campylobacter hominis (strain ATCC BAA-381 / DSM 21671 / CCUG 45161 / LMG 19568 / NCTC 13146 / CH001A) protein is Nucleoid-associated protein CHAB381_0200.